A 930-amino-acid chain; its full sequence is Protein translocase subunit SecA (930 aa).

Residues Gln-87, 105-109 (GEGKT), and Asp-515 each bind ATP. Residues Cys-914, Cys-916, Cys-925, and His-926 each coordinate Zn(2+).

It belongs to the SecA family. In terms of assembly, monomer and homodimer. Part of the essential Sec protein translocation apparatus which comprises SecA, SecYEG and auxiliary proteins SecDF-YajC and YidC. Zn(2+) is required as a cofactor.

Its subcellular location is the cell inner membrane. It is found in the cytoplasm. The catalysed reaction is ATP + H2O + cellular proteinSide 1 = ADP + phosphate + cellular proteinSide 2.. Functionally, part of the Sec protein translocase complex. Interacts with the SecYEG preprotein conducting channel. Has a central role in coupling the hydrolysis of ATP to the transfer of proteins into and across the cell membrane, serving both as a receptor for the preprotein-SecB complex and as an ATP-driven molecular motor driving the stepwise translocation of polypeptide chains across the membrane. This Cupriavidus metallidurans (strain ATCC 43123 / DSM 2839 / NBRC 102507 / CH34) (Ralstonia metallidurans) protein is Protein translocase subunit SecA.